The primary structure comprises 348 residues: MSSDWIFGACAVPDARMRSAALARQEQLTKPPGALGRLEHLAVRLAAWQRTDRPGVQRVWIAVYAADHGVAAEGVSAFPQAVTGEMVRNFARGGAAIAVLARELGARLEVVNLGVVNDPGDLPRVRRAWIAPSSANICEQPAMTATQLRDALAAGADSIAQAKSCDTQLFVGGEMGIGNTTAAAALGCALLSQFPQAMAGAGTGLDAEGIAHKATVITRALALHADASSPLERLRRLGGFEIAALVGAYIAAAQAGIPVLVDGFITTAAALVATRLNPGVREWLLFGHRSQERGHAALLRAMDAEPLLQLDLRLGEASGAAVAIPLLRSACALHNGMATFAEAGVSDA.

E316 (proton acceptor) is an active-site residue.

This sequence belongs to the CobT family.

It catalyses the reaction 5,6-dimethylbenzimidazole + nicotinate beta-D-ribonucleotide = alpha-ribazole 5'-phosphate + nicotinate + H(+). It participates in nucleoside biosynthesis; alpha-ribazole biosynthesis; alpha-ribazole from 5,6-dimethylbenzimidazole: step 1/2. Its function is as follows. Catalyzes the synthesis of alpha-ribazole-5'-phosphate from nicotinate mononucleotide (NAMN) and 5,6-dimethylbenzimidazole (DMB). In Xanthomonas euvesicatoria pv. vesicatoria (strain 85-10) (Xanthomonas campestris pv. vesicatoria), this protein is Nicotinate-nucleotide--dimethylbenzimidazole phosphoribosyltransferase.